A 161-amino-acid chain; its full sequence is Nucleotide-binding protein Bphy_0527 (161 aa).

This sequence belongs to the YajQ family.

In terms of biological role, nucleotide-binding protein. The polypeptide is Nucleotide-binding protein Bphy_0527 (Paraburkholderia phymatum (strain DSM 17167 / CIP 108236 / LMG 21445 / STM815) (Burkholderia phymatum)).